A 274-amino-acid chain; its full sequence is Bis(5'-nucleosyl)-tetraphosphatase, symmetrical (274 aa).

This sequence belongs to the Ap4A hydrolase family.

The catalysed reaction is P(1),P(4)-bis(5'-adenosyl) tetraphosphate + H2O = 2 ADP + 2 H(+). In terms of biological role, hydrolyzes diadenosine 5',5'''-P1,P4-tetraphosphate to yield ADP. This chain is Bis(5'-nucleosyl)-tetraphosphatase, symmetrical, found in Shewanella sp. (strain MR-7).